The sequence spans 139 residues: Cofilin (139 aa).

The ADF-H domain maps to 4–135 (GVKVSQECLD…SYDTVLDKVS (132 aa)).

Belongs to the actin-binding proteins ADF family.

It is found in the cytoplasm. The protein localises to the cytoskeleton. The protein resides in the nucleus matrix. Its function is as follows. Controls reversibly actin polymerization and depolymerization in a pH-sensitive manner. It has the ability to bind G- and F-actin in a 1:1 ratio of cofilin to actin. Binding to F-actin is regulated by tropomyosin. It is the major component of intranuclear and cytoplasmic actin rods. Required for accumulation of actin at the cell division site via depolymerizing actin at the cell ends. In association with myosin II has a role in the assembly of the contractile ring via severing actin filaments. Involved in the maintenance of the contractile ring once formed. In association with profilin and capping protein, has a role in the mitotic reorganization of the actin cytoskeleton. The protein is Cofilin (COF1) of Mycosarcoma maydis (Corn smut fungus).